The chain runs to 1938 residues: MSSDADMAIFGEAAPYLRKSEKERIEAQNKPFDAKSSVFVADPKESFVKATVQSREGGKVTAKTEAGATVTVKEDQVFPMNPPKYDKIEDMAMMTHLHEPAVLYNLKERYAAWMIYTYSGLFCVTVNPYKWLPVYNAEVVTAYRGKKRQEAPPHIFSISDNAYQFMLTDRENQSILITGESGAGKTVNTKRVIQYFATIAVTGDKKKEEATSGKMQGTLEDQIISANPLLEAFGNAKTVRNDNSSRFGKFIRIHFGTTGKLASADIETYLLEKSRVTFQLKAERSYHIFYQIMSNKKPDLIEMLLITTNPYDYAFVSQGEITVPSIDDQEELMATDSAIDILGFTSDERVSIYKLTGAVMHYGNMKFKQKQREEQAEPDGTEVADKAAYLQSLNSADLLKALCYPRVKVGNEYVTKGQTVQQVYNAVGALAKAVYEKMFLWMVTRINQQLDTKQPRQYFIGVLDIAGFEIFDFNSLEQLCINFTNEKLQQFFNHHMFVLEQEEYKKEGIEWEFIDFGMDLAACIELIEKPMGIFSILEEECMFPKATDTSFKNKLYEQHLGKSNNFQKPKPAKGKVEAHFSLVHYAGTVDYNITGWLDKNKDPLNETVVGLYQKSAMKTLAFLFTGTAAAEAEGGGKKGGKKKGSSFQTVSALFRENLNKLMTNLRSTHPHFVRCIIPNETKTPGAMEHELVLHQLRCNGVLEGIRICRKGFPSRILYADFKQRYKVLNASAIPEGQFIDSKKASEKLLGSIDVDHTQYKFGHTKVFFKAGLLGLLEEMRDDKLAQLITRTQAMCRGFLARVEYKKMVERRESIFCIQYNIRAFMNVKHWPWMKLYFKIKPLLKSAETEKEMANMKEEFEKTKESLAKAEAKRKELEEKMVALMQEKNDLQLQVQAEADSLADAEERCDQLIKTKIQLEAKIKEVTERAEDEEEINAELTAKKRKLEDECSELKKDIDDLELTLAKVEKEKHATENKVKNLTEEMAGLDETIAKLTKEKKALQEAHQQTLDDLQAEEDKVNTLTKAKTKLEQQVDDLEGSLEQEKKIRMDLERAKRKLEGDLKLAQESTMDIENDKQQLDEKLKKKEFEMSNLQSKIEDEQALAMQLQKKIKELQARIEELEEEIEAERASRAKAEKQRSDLSRELEEISERLEEAGGATSAQIEMNKKREAEFQKMRRDLEEATLQHEATAATLRKKHADSVAELGEQIDNLQRVKQKLEKEKSELKMEIDDLASNMETVSKAKGNLEKMCRTLEDQVSELKTKEEEHQRLINDLSAQRARLQTESGEFSRQLDEKDSLVSQLSRGKQAFTQQIEELKRQLEEEIKAKSALAHALQSARHDCDLLREQYEEEQEAKAELQRAMSKANSEVAQWRTKYETDAIQRTEELEEAKKKLAQRLQDAEEHVEAVNAKCASLEKTKQRLQNEVEDLMIDVERTNAACAALDKKQRNFDKILAEWKHKYEETHAELEASQKESRSLSTELFKVKNAYEESLDQLETLKRENKNLQQEISDLTEQIAEGGKRIHELEKVKKQVEQEKSELQAALEEAEASLEHEEGKILRIQLELNQVKSEIDRKIAEKDEEIDQLKRNHIRVVESMQSTLDAEIRSRNDAIRIKKKMEGDLNEMEIQLNHANRMAAEALRNYRNTQGILKDTQLHLDDALRGQEDLKEQLAMVERRANLLQAEIEELRATLEQTERSRKVAEQELLDASERVQLLHTQNTSLINTKKKLETDISQIQGEMEDIVQEARNAEEKAKKAITDAAMMAEELKKEQDTSAHLERMKKNMEQTVKDLQHRLDEAEQLALKGGKKQIQKLEARVRELEAEVESEQKRNVEAVKGLRKHERRVKELTYQTEEDRKNVLRLQDLVDKLQAKVKSYKRQAEEAEEQSNVNLSKFRKLQHELEEAEERADIAESQVNKLRVKSREVHTKVISEE.

One can recognise a Myosin N-terminal SH3-like domain in the interval D33–P82. Phosphoserine is present on S36. T64 and T69 each carry phosphothreonine. Residues D86–D781 enclose the Myosin motor domain. G179 to T186 contributes to the ATP binding site. Position 389 is a phosphotyrosine (Y389). A Phosphoserine modification is found at S392. Position 419 is a phosphothreonine (T419). A Phosphotyrosine modification is found at Y424. Residues L658–E680 are actin-binding. The residue at position 756 (H756) is a Pros-methylhistidine. Residues K760–G774 are actin-binding. An IQ domain is found at L784–S813. The stretch at S845–K1926 forms a coiled coil. A phosphoserine mark is found at S1091, S1095, S1161, and S1236. T1240 bears the Phosphothreonine mark. Position 1242 is a phosphoserine (S1242). T1254 is modified (phosphothreonine). S1260 carries the phosphoserine modification. Phosphothreonine is present on T1264. S1277 carries the post-translational modification Phosphoserine. At T1285 the chain carries Phosphothreonine. Phosphoserine is present on residues S1287, S1291, S1302, and S1305. Y1463 is modified (phosphotyrosine). T1466 bears the Phosphothreonine mark. Residue S1473 is modified to Phosphoserine. Y1491 is subject to Phosphotyrosine. S1494 carries the post-translational modification Phosphoserine. A Phosphothreonine modification is found at T1500. S1513 is modified (phosphoserine). T1516 bears the Phosphothreonine mark. Phosphoserine is present on residues S1541, S1553, S1573, S1599, S1602, S1713, and S1725. T1729 and T1735 each carry phosphothreonine. S1738 is modified (phosphoserine).

The protein belongs to the TRAFAC class myosin-kinesin ATPase superfamily. Myosin family. Muscle myosin is a hexameric protein that consists of 2 heavy chain subunits (MHC), 2 alkali light chain subunits (MLC) and 2 regulatory light chain subunits (MLC-2).

It is found in the cytoplasm. The protein localises to the myofibril. Its function is as follows. Muscle contraction. The chain is Myosin-4 (MYH4) from Oryctolagus cuniculus (Rabbit).